The sequence spans 94 residues: Integration host factor subunit beta (94 aa).

The protein belongs to the bacterial histone-like protein family. Heterodimer of an alpha and a beta chain.

Functionally, this protein is one of the two subunits of integration host factor, a specific DNA-binding protein that functions in genetic recombination as well as in transcriptional and translational control. The sequence is that of Integration host factor subunit beta (ihfB) from Pasteurella multocida (strain Pm70).